Consider the following 472-residue polypeptide: Glycine--tRNA ligase (472 aa).

Positions 109 and 174 each coordinate substrate. ATP-binding positions include 206-208, 216-221, 293-294, and 337-340; these read RNE, FRTREF, EL, and GLTR. 221 to 225 contributes to the substrate binding site; the sequence is FEQME. 333-337 is a substrate binding site; it reads EPAAG.

This sequence belongs to the class-II aminoacyl-tRNA synthetase family. Homodimer.

The protein resides in the cytoplasm. The enzyme catalyses tRNA(Gly) + glycine + ATP = glycyl-tRNA(Gly) + AMP + diphosphate. Functionally, catalyzes the attachment of glycine to tRNA(Gly). This is Glycine--tRNA ligase from Cutibacterium acnes (strain DSM 16379 / KPA171202) (Propionibacterium acnes).